The primary structure comprises 385 residues: GTP cyclohydrolase-2 (385 aa).

Positions 1–189 (MYADAPSDSA…RDIADYRVHV (189 aa)) are DHBP synthase-like. Positions 190-385 (VRTLRRVAEA…TKAERSGHMF (196 aa)) are GTP cyclohydrolase II. Position 240-244 (240-244 (RLHSE)) interacts with GTP. Zn(2+) contacts are provided by Cys245, Cys256, and Cys258. GTP is bound by residues Gln261, 283 to 285 (EGR), and Thr305. Catalysis depends on Asp317, which acts as the Proton acceptor. The Nucleophile role is filled by Arg319. Residues Thr340 and Lys345 each contribute to the GTP site.

In the N-terminal section; belongs to the DHBP synthase family. The protein in the C-terminal section; belongs to the GTP cyclohydrolase II family. The cofactor is Zn(2+).

It catalyses the reaction GTP + 4 H2O = 2,5-diamino-6-hydroxy-4-(5-phosphoribosylamino)-pyrimidine + formate + 2 phosphate + 3 H(+). Its pathway is cofactor biosynthesis; riboflavin biosynthesis; 5-amino-6-(D-ribitylamino)uracil from GTP: step 1/4. In terms of biological role, catalyzes the conversion of GTP to 2,5-diamino-6-ribosylamino-4(3H)-pyrimidinone 5'-phosphate (DARP), formate and pyrophosphate. This is GTP cyclohydrolase-2 (ribA) from Azospirillum brasilense.